Here is a 334-residue protein sequence, read N- to C-terminus: MSFNLRNRSLLTVQDYTPREFRYLVDLARDLKRAKYARTEQEHLKGKEICLIFEKTSTRTRCAFEVACSDQGANVTYLDPAGSQIGHKESFKDTARVLGRMYDAIEYRGASQAGVETLAKYAGVPVYNGLTDEYHPTQMIADVMTMREHSDKPISEIKYAYIGDTRSNMGHSLLIVGCLMGMDVRICGPRSLWPSEEYQTIAKRLKAQSGARLMITDNPREAVEGVDFIHTDVWVSMGEPKEVWKERIQLLTPYQVNAELMAASGNPQTKFMHCLPAYHDTETTIGKQISDDYGMSDGLEVTDEVFESQANIAFEQAENRMHTIKALLVATLGD.

Carbamoyl phosphate is bound by residues 57 to 60 (STRT), Gln84, Arg108, and 135 to 138 (HPTQ). Residues Asn168, Asp232, and 236–237 (SM) contribute to the L-ornithine site. Carbamoyl phosphate is bound by residues 274 to 275 (CL) and Arg320.

It belongs to the aspartate/ornithine carbamoyltransferase superfamily. OTCase family.

It localises to the cytoplasm. It catalyses the reaction carbamoyl phosphate + L-ornithine = L-citrulline + phosphate + H(+). It functions in the pathway amino-acid degradation; L-arginine degradation via ADI pathway; carbamoyl phosphate from L-arginine: step 2/2. Reversibly catalyzes the transfer of the carbamoyl group from carbamoyl phosphate (CP) to the N(epsilon) atom of ornithine (ORN) to produce L-citrulline. The chain is Ornithine carbamoyltransferase, catabolic (arcB) from Rhizobium meliloti (strain 1021) (Ensifer meliloti).